The following is a 288-amino-acid chain: Ribosomal protein L11 methyltransferase (288 aa).

S-adenosyl-L-methionine contacts are provided by T134, G157, D179, and N224.

Belongs to the methyltransferase superfamily. PrmA family.

Its subcellular location is the cytoplasm. It catalyses the reaction L-lysyl-[protein] + 3 S-adenosyl-L-methionine = N(6),N(6),N(6)-trimethyl-L-lysyl-[protein] + 3 S-adenosyl-L-homocysteine + 3 H(+). Functionally, methylates ribosomal protein L11. The chain is Ribosomal protein L11 methyltransferase from Caulobacter sp. (strain K31).